Here is a 244-residue protein sequence, read N- to C-terminus: Carboxy-S-adenosyl-L-methionine synthase (244 aa).

Residues Tyr41, 66–68, Asn134, and Arg201 each bind S-adenosyl-L-methionine; that span reads GCS.

Belongs to the class I-like SAM-binding methyltransferase superfamily. Cx-SAM synthase family. In terms of assembly, homodimer.

The catalysed reaction is prephenate + S-adenosyl-L-methionine = carboxy-S-adenosyl-L-methionine + 3-phenylpyruvate + H2O. Catalyzes the conversion of S-adenosyl-L-methionine (SAM) to carboxy-S-adenosyl-L-methionine (Cx-SAM). This chain is Carboxy-S-adenosyl-L-methionine synthase, found in Cellvibrio japonicus (strain Ueda107) (Pseudomonas fluorescens subsp. cellulosa).